The chain runs to 463 residues: MTLRIFDTGTRSLRDFEPIRPGHASIYLCGATPQTQPHIGHVRSGVAFDILRRWLIAQGLDVAFVRNVTDIDDKILTKAAENGRPWWEWVSTYEREFTWAYNQLGVLPPSVEPRATGHVTQMVEYMQRLIDNGFAYAAEGSVYFDVAAWTAAEGSDYGSLSGNRVEEMEQGETEITGKRGAHDFALWKAAKPGEPSWPTPWGDGRPGWHLECSAMATWYLGGEFDIHCGGLDLQFPHHENEIAQSHAAGDGFANYWMHNHWVTMSGEKMSKSLGNVLSVPNILDKVRPVELRYYLGSAHYRSMLEYSEGALLEAAAGYRRIEAFLTKVADVEAGQWTTEFEEAMNDDLAVPRALAEIHTQVRHGNSALAAGDVDKAHEIAASVRAMAAVLGVDPLDEKWLDSAASDSSTNAALDVLVQAELQRRTEARAAKDWATADEVRDRLHAAGITVTDTPDGPTWALNN.

Position 29 (C29) interacts with Zn(2+). The 'HIGH' region signature appears at 31 to 41 (ATPQTQPHIGH). Zn(2+)-binding residues include C212, H237, and E241. The 'KMSKS' region signature appears at 268–272 (KMSKS). Position 271 (K271) interacts with ATP.

This sequence belongs to the class-I aminoacyl-tRNA synthetase family. As to quaternary structure, monomer. Zn(2+) is required as a cofactor.

It is found in the cytoplasm. The catalysed reaction is tRNA(Cys) + L-cysteine + ATP = L-cysteinyl-tRNA(Cys) + AMP + diphosphate. This chain is Cysteine--tRNA ligase, found in Corynebacterium diphtheriae (strain ATCC 700971 / NCTC 13129 / Biotype gravis).